Reading from the N-terminus, the 322-residue chain is Eukaryotic translation initiation factor 3 subunit I (322 aa).

5 WD repeats span residues 4–43 (GHERSITQIKYNREGDLLFSCSKDQKPNVWYSLNGERLGT), 46–85 (GHQGAVWCLDVDWESRKLITGAGDMTTKIWDVEYGTVIAS), 141–180 (MTESKITSMLWGPLDETIITGHDNGNIAIWDIRKGQKVVD), 184–223 (DHSAGINDMQLSKDGTMFVTASKDTTAKLFDSESLMCLKS), and 281–322 (GHFG…NIFE).

It belongs to the eIF-3 subunit I family. In terms of assembly, component of the eukaryotic translation initiation factor 3 (eIF-3) complex. The eIF-3 complex interacts with pix.

Its subcellular location is the cytoplasm. In terms of biological role, component of the eukaryotic translation initiation factor 3 (eIF-3) complex, which is involved in protein synthesis of a specialized repertoire of mRNAs and, together with other initiation factors, stimulates binding of mRNA and methionyl-tRNAi to the 40S ribosome. The eIF-3 complex specifically targets and initiates translation of a subset of mRNAs involved in cell proliferation. The sequence is that of Eukaryotic translation initiation factor 3 subunit I from Drosophila yakuba (Fruit fly).